Consider the following 387-residue polypeptide: 8-amino-7-oxononanoate synthase (387 aa).

Arg-19 contributes to the substrate binding site. Residue 106–107 (GY) participates in pyridoxal 5'-phosphate binding. Substrate is bound at residue His-131. Ser-177, His-205, and Thr-234 together coordinate pyridoxal 5'-phosphate. Lys-237 is modified (N6-(pyridoxal phosphate)lysine). Thr-351 contributes to the substrate binding site.

Belongs to the class-II pyridoxal-phosphate-dependent aminotransferase family. BioF subfamily. As to quaternary structure, homodimer. Pyridoxal 5'-phosphate is required as a cofactor.

It carries out the reaction 6-carboxyhexanoyl-[ACP] + L-alanine + H(+) = (8S)-8-amino-7-oxononanoate + holo-[ACP] + CO2. It participates in cofactor biosynthesis; biotin biosynthesis. Catalyzes the decarboxylative condensation of pimeloyl-[acyl-carrier protein] and L-alanine to produce 8-amino-7-oxononanoate (AON), [acyl-carrier protein], and carbon dioxide. This chain is 8-amino-7-oxononanoate synthase, found in Methylococcus capsulatus (strain ATCC 33009 / NCIMB 11132 / Bath).